The chain runs to 179 residues: ATP synthase subunit delta (179 aa).

Belongs to the ATPase delta chain family. In terms of assembly, F-type ATPases have 2 components, F(1) - the catalytic core - and F(0) - the membrane proton channel. F(1) has five subunits: alpha(3), beta(3), gamma(1), delta(1), epsilon(1). F(0) has three main subunits: a(1), b(2) and c(10-14). The alpha and beta chains form an alternating ring which encloses part of the gamma chain. F(1) is attached to F(0) by a central stalk formed by the gamma and epsilon chains, while a peripheral stalk is formed by the delta and b chains.

The protein localises to the cell inner membrane. In terms of biological role, f(1)F(0) ATP synthase produces ATP from ADP in the presence of a proton or sodium gradient. F-type ATPases consist of two structural domains, F(1) containing the extramembraneous catalytic core and F(0) containing the membrane proton channel, linked together by a central stalk and a peripheral stalk. During catalysis, ATP synthesis in the catalytic domain of F(1) is coupled via a rotary mechanism of the central stalk subunits to proton translocation. Its function is as follows. This protein is part of the stalk that links CF(0) to CF(1). It either transmits conformational changes from CF(0) to CF(1) or is implicated in proton conduction. The sequence is that of ATP synthase subunit delta from Anaeromyxobacter sp. (strain Fw109-5).